Consider the following 498-residue polypeptide: MSTTKSDNYISELRKVIWPIERYENKKFLPMAFMMFCILLNYSTLRSIKDGFVVTDIGAEAISFLKTYIVLPSAVIAMIVYVKLCDILKQENVFYVITSFFLAYFALFAFVLYPNPDLVHPNPEAIESLSLAYPNFKWFIRIVGKWSFASFYTMAELWGTLMLSLLFWQFANQITKTDEAKRFYSMFGLLANLALPVTSLIIGYFLHEKTQIVAEHLKFTPLFVIMIISSLAVILTYRWMNKNVLTDPKLYDPALVKGKKAKAKMSLIESFKMIFTSKYVGYIALLLIAYGISVNLVEGVWKSKLKELHPTKEAYTMYMGQFQAYQGWVAIAFMIIGSNILRKVSWLTAAMITPLMMLITGIAFFAFIFFDSVIAMYLTGILASGPLALAVMIGTIQNVLSKGVKYSLFDATKNMAYIPLDKDLRVKGQAAVEVIGGRFGKSGGAIIQSTFFIIFPALGFVEATPYFASIFFVIVILWIYAVKGLNKEYQVLVNNTEK.

The Cytoplasmic portion of the chain corresponds to 1–33; that stretch reads MSTTKSDNYISELRKVIWPIERYENKKFLPMAF. Residues 34 to 54 traverse the membrane as a helical segment; that stretch reads MMFCILLNYSTLRSIKDGFVV. Cysteine 37 and cysteine 85 are disulfide-bonded. The Extracellular segment spans residues 55–67; it reads TDIGAEAISFLKT. The helical transmembrane segment at 68–88 threads the bilayer; the sequence is YIVLPSAVIAMIVYVKLCDIL. The Cytoplasmic portion of the chain corresponds to 89–92; it reads KQEN. Residues 93–113 form a helical membrane-spanning segment; that stretch reads VFYVITSFFLAYFALFAFVLY. At 114–147 the chain is on the extracellular side; it reads PNPDLVHPNPEAIESLSLAYPNFKWFIRIVGKWS. A helical transmembrane segment spans residues 148–168; the sequence is FASFYTMAELWGTLMLSLLFW. The Cytoplasmic portion of the chain corresponds to 169 to 184; sequence QFANQITKTDEAKRFY. A helical membrane pass occupies residues 185–205; it reads SMFGLLANLALPVTSLIIGYF. Residues 206-218 are Extracellular-facing; that stretch reads LHEKTQIVAEHLK. Residues 219 to 239 traverse the membrane as a helical segment; sequence FTPLFVIMIISSLAVILTYRW. The Cytoplasmic segment spans residues 240–279; that stretch reads MNKNVLTDPKLYDPALVKGKKAKAKMSLIESFKMIFTSKY. The helical transmembrane segment at 280 to 300 threads the bilayer; the sequence is VGYIALLLIAYGISVNLVEGV. At 301–320 the chain is on the extracellular side; sequence WKSKLKELHPTKEAYTMYMG. Residues 321–341 form a helical membrane-spanning segment; it reads QFQAYQGWVAIAFMIIGSNIL. Topologically, residues 342-348 are cytoplasmic; it reads RKVSWLT. Residues 349 to 369 traverse the membrane as a helical segment; sequence AAMITPLMMLITGIAFFAFIF. Residues 370 to 379 lie on the Extracellular side of the membrane; sequence FDSVIAMYLT. A helical membrane pass occupies residues 380–400; sequence GILASGPLALAVMIGTIQNVL. Topologically, residues 401–438 are cytoplasmic; that stretch reads SKGVKYSLFDATKNMAYIPLDKDLRVKGQAAVEVIGGR. ATP is bound at residue 436–442; sequence GGRFGKS. Residues 439-459 traverse the membrane as a helical segment; sequence FGKSGGAIIQSTFFIIFPALG. Residues 460-465 lie on the Extracellular side of the membrane; that stretch reads FVEATP. A helical transmembrane segment spans residues 466–486; it reads YFASIFFVIVILWIYAVKGLN. The Cytoplasmic portion of the chain corresponds to 487 to 498; sequence KEYQVLVNNTEK.

Belongs to the ADP/ATP translocase tlc family.

Its subcellular location is the cell membrane. In terms of biological role, provides the rickettsial cell with host ATP in exchange for rickettsial ADP. This is an obligate exchange system. This energy acquiring activity is an important component of rickettsial parasitism. In Rickettsia bellii (strain RML369-C), this protein is ADP,ATP carrier protein 1 (tlcA).